Here is a 631-residue protein sequence, read N- to C-terminus: Transmembrane and coiled-coil domain-containing protein 4 (631 aa).

Residues 1-26 form a disordered region; the sequence is MATWNRPHPRLPVAPEPVAEGESQQP. Residues 153-183 adopt a coiled-coil conformation; the sequence is EEVFLESLKDAKEEESETAEESRKRKEKRRK. Transmembrane regions (helical) follow at residues 187–203, 204–220, 228–248, and 343–363; these read YLLI…VIGV, TGGL…ATII, LGSV…GAGL, and LSGI…ANVI. The interval 523 to 631 is disordered; sequence WSEKGLPLAP…ETQESCAELD (109 aa). Polar residues predominate over residues 571–590; the sequence is IPSSASQAQVPAGLDQSTED.

The protein belongs to the TMCO4 family.

It localises to the membrane. The sequence is that of Transmembrane and coiled-coil domain-containing protein 4 (Tmco4) from Rattus norvegicus (Rat).